A 217-amino-acid chain; its full sequence is MSSLYYANALFSKYPAASSVFAPGAFPEQTSCAFASNPQRPGYGAGPGAPFSASVQGLYSGGGAMAGQSAAGVYAAGYGLEPSSFNMHCAPFEQNLSGVCPGDPAKAAGAKEQRDSDLAAESNFRIYPWMRSSGPDRKRGRQTYTRYQTLELEKEFHYNRYLTRRRRIEIAHTLCLTERQIKIWFQNRRMKWKKENKTSGPGTTGQDKAEAEEEEEE.

An Antp-type hexapeptide motif is present at residues 126–131 (IYPWMR). Residues 137–196 (RKRGRQTYTRYQTLELEKEFHYNRYLTRRRRIEIAHTLCLTERQIKIWFQNRRMKWKKEN) constitute a DNA-binding region (homeobox). Residues 192-217 (WKKENKTSGPGTTGQDKAEAEEEEEE) form a disordered region.

This sequence belongs to the Antp homeobox family. In terms of assembly, forms a DNA-binding heterodimer with transcription factor PBX1.

It is found in the nucleus. Functionally, sequence-specific transcription factor which is part of a developmental regulatory system that provides cells with specific positional identities on the anterior-posterior axis. In Mus musculus (Mouse), this protein is Homeobox protein Hox-B7 (Hoxb7).